We begin with the raw amino-acid sequence, 283 residues long: Elongation factor Ts (283 aa).

The interval 79–82 is involved in Mg(2+) ion dislocation from EF-Tu; sequence TDFV.

Belongs to the EF-Ts family.

It localises to the cytoplasm. Functionally, associates with the EF-Tu.GDP complex and induces the exchange of GDP to GTP. It remains bound to the aminoacyl-tRNA.EF-Tu.GTP complex up to the GTP hydrolysis stage on the ribosome. In Shewanella baltica (strain OS155 / ATCC BAA-1091), this protein is Elongation factor Ts.